The following is a 162-amino-acid chain: Disulfide bond formation protein B (162 aa).

Residues 1 to 4 are Cytoplasmic-facing; that stretch reads MRII. Residues 5–21 form a helical membrane-spanning segment; sequence FLLIFLACAGLIGYALY. Over 22 to 39 the chain is Periplasmic; sequence LQLMDGLLPCPLCIFQRI. Cys31 and Cys34 are disulfide-bonded. The helical transmembrane segment at 40 to 56 threads the bilayer; that stretch reads AYWLIGITALFTFIHNP. Over 57-62 the chain is Cytoplasmic; the sequence is QSLGQH. A helical membrane pass occupies residues 63 to 80; that stretch reads IYYGLIILFSLAGAIVAG. Topologically, residues 81-136 are periplasmic; the sequence is RQAWLIRFPEAFECGISPEEAFLNGLPLAQWWPNMFEANGDCNDGTWQFLSLTLPD. Cys94 and Cys122 are oxidised to a cystine. The chain crosses the membrane as a helical span at residues 137–155; the sequence is WSLLIFAAFGIIAGLLWHK. Topologically, residues 156–162 are cytoplasmic; it reads KYNSINQ.

It belongs to the DsbB family.

Its subcellular location is the cell inner membrane. Its function is as follows. Required for disulfide bond formation in some periplasmic proteins. Acts by oxidizing the DsbA protein. In Nitrosomonas eutropha (strain DSM 101675 / C91 / Nm57), this protein is Disulfide bond formation protein B.